The following is an 810-amino-acid chain: Zinc finger transcription factor YRR1 (810 aa).

Residues 1-47 (MKRRSDALLGSFQATNVTPPSDNSNSTAGGANGSNSGTPTSTSGKKR) are disordered. Positions 12-22 (FQATNVTPPSD) are enriched in polar residues. Positions 23–43 (NSNSTAGGANGSNSGTPTSTS) are enriched in low complexity. The segment at residues 54–82 (CGFCRRRKLRCDQQKPMCSTCISRNLTTC) is a DNA-binding region (zn(2)-C6 fungal-type). The tract at residues 722–742 (ELDPQSDNPSSEAKIVSDRQR) is disordered.

Its subcellular location is the cytoplasm. It is found in the nucleus. In terms of biological role, transcription factor involved in the regulation of multidrug resistance genes. Acts in concert with YRR1. This is Zinc finger transcription factor YRR1 (YRR1) from Saccharomyces cerevisiae (strain ATCC 204508 / S288c) (Baker's yeast).